A 152-amino-acid polypeptide reads, in one-letter code: Ribonuclease HI (152 aa).

Positions 1–142 (MDSKVVIYTD…ADKLAVQGRE (142 aa)) constitute an RNase H type-1 domain. Residues Asp-10, Glu-48, Asp-70, and Asp-134 each contribute to the Mg(2+) site.

It belongs to the RNase H family. As to quaternary structure, monomer. Mg(2+) is required as a cofactor.

It localises to the cytoplasm. The catalysed reaction is Endonucleolytic cleavage to 5'-phosphomonoester.. Its function is as follows. Endonuclease that specifically degrades the RNA of RNA-DNA hybrids. This Rickettsia prowazekii (strain Madrid E) protein is Ribonuclease HI (rnhA).